Consider the following 291-residue polypeptide: Formamidopyrimidine-DNA glycosylase (291 aa).

The active-site Schiff-base intermediate with DNA is the Pro2. The active-site Proton donor is Glu3. The active-site Proton donor; for beta-elimination activity is the Lys58. 3 residues coordinate DNA: His100, Arg123, and Lys166. Residues 257–291 (SVYGREGKECFQCGIPITRISQSGRSSFYCSQCQK) form an FPG-type zinc finger. The Proton donor; for delta-elimination activity role is filled by Arg281.

Belongs to the FPG family. In terms of assembly, monomer. Zn(2+) is required as a cofactor.

It carries out the reaction Hydrolysis of DNA containing ring-opened 7-methylguanine residues, releasing 2,6-diamino-4-hydroxy-5-(N-methyl)formamidopyrimidine.. The enzyme catalyses 2'-deoxyribonucleotide-(2'-deoxyribose 5'-phosphate)-2'-deoxyribonucleotide-DNA = a 3'-end 2'-deoxyribonucleotide-(2,3-dehydro-2,3-deoxyribose 5'-phosphate)-DNA + a 5'-end 5'-phospho-2'-deoxyribonucleoside-DNA + H(+). In terms of biological role, involved in base excision repair of DNA damaged by oxidation or by mutagenic agents. Acts as a DNA glycosylase that recognizes and removes damaged bases. Has a preference for oxidized purines, such as 7,8-dihydro-8-oxoguanine (8-oxoG). Has AP (apurinic/apyrimidinic) lyase activity and introduces nicks in the DNA strand. Cleaves the DNA backbone by beta-delta elimination to generate a single-strand break at the site of the removed base with both 3'- and 5'-phosphates. The chain is Formamidopyrimidine-DNA glycosylase from Bartonella quintana (strain Toulouse) (Rochalimaea quintana).